The sequence spans 132 residues: MSKLLLKTPCTTWTFDSLMACVFGIKVSDVKVYFDILKNGPSKINDIAERINRDRSTVQRAVQNLMNAGLVKRKQVNIKDGGYYYVYEAIPFEETKKIIKKTMEEWCNNMKKWVEELEFEDVVKEYLENIEE.

This is an uncharacterized protein from Methanocaldococcus jannaschii (strain ATCC 43067 / DSM 2661 / JAL-1 / JCM 10045 / NBRC 100440) (Methanococcus jannaschii).